The following is a 202-amino-acid chain: Small ribosomal subunit protein uS4 (202 aa).

Residues 22 to 43 form a disordered region; sequence TRKSARRAYPPGQHGQNRKKRS. Residues 90–152 form the S4 RNA-binding domain; it reads MRLDNTVFRL…APSRKLVENN (63 aa).

This sequence belongs to the universal ribosomal protein uS4 family. Part of the 30S ribosomal subunit. Contacts protein S5. The interaction surface between S4 and S5 is involved in control of translational fidelity.

Functionally, one of the primary rRNA binding proteins, it binds directly to 16S rRNA where it nucleates assembly of the body of the 30S subunit. Its function is as follows. With S5 and S12 plays an important role in translational accuracy. This Nostoc sp. (strain PCC 7120 / SAG 25.82 / UTEX 2576) protein is Small ribosomal subunit protein uS4.